A 253-amino-acid chain; its full sequence is Anamorsin homolog (253 aa).

Positions 4-129 are N-terminal SAM-like domain; the sequence is FKGLQKSLYI…ETGSSARLSF (126 aa). Positions 130–161 are linker; that stretch reads AKKNSSTLNVWKISGDDDELIDEEDLLDEVDK. Residues Cys-172, Cys-181, Cys-184, and Cys-186 each contribute to the [2Fe-2S] cluster site. A fe-S binding site A region spans residues 172–186; that stretch reads CSTTGKRKACKNCSC. [4Fe-4S] cluster is bound by residues Cys-214, Cys-217, Cys-225, and Cys-228. Short sequence motifs (cx2C motif) lie at residues 214–217 and 225–228; these read CGNC and CSSC. Positions 214–228 are fe-S binding site B; that stretch reads CGNCYLGDAFRCSSC.

It belongs to the anamorsin family. In terms of assembly, monomer. [2Fe-2S] cluster serves as cofactor. It depends on [4Fe-4S] cluster as a cofactor.

It is found in the cytoplasm. Its subcellular location is the mitochondrion intermembrane space. Its function is as follows. Component of the cytosolic iron-sulfur (Fe-S) protein assembly (CIA) machinery. Required for the maturation of extramitochondrial Fe-S proteins. Part of an electron transfer chain functioning in an early step of cytosolic Fe-S biogenesis, facilitating the de novo assembly of a [4Fe-4S] cluster on the cytosolic Fe-S scaffold complex. Electrons are transferred from NADPH via a FAD- and FMN-containing diflavin oxidoreductase. Together with the diflavin oxidoreductase, also required for the assembly of the diferric tyrosyl radical cofactor of ribonucleotide reductase (RNR), probably by providing electrons for reduction during radical cofactor maturation in the catalytic small subunit. This is Anamorsin homolog from Drosophila willistoni (Fruit fly).